The primary structure comprises 469 residues: 3-isopropylmalate dehydratase large subunit (469 aa).

[4Fe-4S] cluster is bound by residues Cys347, Cys408, and Cys411.

The protein belongs to the aconitase/IPM isomerase family. LeuC type 1 subfamily. In terms of assembly, heterodimer of LeuC and LeuD. The cofactor is [4Fe-4S] cluster.

It catalyses the reaction (2R,3S)-3-isopropylmalate = (2S)-2-isopropylmalate. It functions in the pathway amino-acid biosynthesis; L-leucine biosynthesis; L-leucine from 3-methyl-2-oxobutanoate: step 2/4. Functionally, catalyzes the isomerization between 2-isopropylmalate and 3-isopropylmalate, via the formation of 2-isopropylmaleate. The chain is 3-isopropylmalate dehydratase large subunit from Actinobacillus pleuropneumoniae serotype 5b (strain L20).